Reading from the N-terminus, the 649-residue chain is tRNA-guanine(15) transglycosylase (649 aa).

Aspartate 88 functions as the Nucleophile in the catalytic mechanism. 2 residues coordinate substrate: aspartate 123 and alanine 194. Residues cysteine 280, cysteine 282, and cysteine 285 each coordinate Zn(2+). In terms of domain architecture, PUA spans 573 to 648 (KYRIVIDSSV…VAVTLRGGLK (76 aa)).

It belongs to the archaeosine tRNA-ribosyltransferase family. It depends on Zn(2+) as a cofactor.

It catalyses the reaction guanosine(15) in tRNA + 7-cyano-7-deazaguanine = 7-cyano-7-carbaguanosine(15) in tRNA + guanine. It functions in the pathway tRNA modification; archaeosine-tRNA biosynthesis. Exchanges the guanine residue with 7-cyano-7-deazaguanine (preQ0) at position 15 in the dihydrouridine loop (D-loop) of archaeal tRNAs. The polypeptide is tRNA-guanine(15) transglycosylase (Methanococcus maripaludis (strain C7 / ATCC BAA-1331)).